The sequence spans 729 residues: Capsid protein VP1 (729 aa).

The segment covering 1-10 (MAPPAKRAKR) has biased composition (basic residues). 3 disordered regions span residues 1–39 (MAPP…DAAA), 96–115 (LATD…KRTR), and 130–185 (KLTS…VGVS). A Nuclear localization signal motif is present at residues 4 to 13 (PAKRAKRGWV). The phospholipase A2-like stretch occupies residues 19–64 (YLGPGNSLDQGEPTNPSDAAAKEHDEAYDQYIKSGKNPYLYFSAAD). Polar residues predominate over residues 25 to 35 (SLDQGEPTNPS). The segment covering 132–142 (TSSAAQQSSQT) has biased composition (low complexity). Gly residues predominate over residues 168–184 (GPGGSGGGGSGGGGVGV). Asn-325 contributes to the Mg(2+) binding site.

Belongs to the parvoviridae capsid protein family.

Its subcellular location is the virion. It localises to the host nucleus. Capsid protein self-assembles to form an icosahedral capsid with a T=1 symmetry, about 22 nm in diameter, and consisting of 60 copies of two size variants of the capsid proteins, VP1 and VP2, which differ by the presence of an N-terminal extension in the minor protein VP1. The capsid encapsulates the genomic ssDNA. Capsid proteins are responsible for the attachment to host cell receptors. This attachment induces virion internalization predominantly through clathrin-dependent endocytosis. Binding to the host receptors also induces capsid rearrangements leading to surface exposure of VP1 N-terminus, specifically its phospholipase A2-like region and putative nuclear localization signal(s). VP1 N-terminus might serve as a lipolytic enzyme to breach the endosomal membrane during entry into host cell and might contribute to virus transport to the nucleus. In Mus musculus (Mouse), this protein is Capsid protein VP1.